The chain runs to 740 residues: Phosphoribosylformylglycinamidine synthase subunit PurL (740 aa).

His-50 is an active-site residue. ATP-binding residues include Tyr-53 and Lys-92. Glu-94 provides a ligand contact to Mg(2+). Residues 95-98 (SHNH) and Arg-117 contribute to the substrate site. Catalysis depends on His-96, which acts as the Proton acceptor. A Mg(2+)-binding site is contributed by Asp-118. Residue Gln-241 participates in substrate binding. Asp-269 serves as a coordination point for Mg(2+). Substrate is bound at residue 313–315 (ESQ). The ATP site is built by Asp-495 and Gly-532. Asn-533 provides a ligand contact to Mg(2+). Ser-535 contacts substrate.

This sequence belongs to the FGAMS family. Monomer. Part of the FGAM synthase complex composed of 1 PurL, 1 PurQ and 2 PurS subunits.

The protein resides in the cytoplasm. The catalysed reaction is N(2)-formyl-N(1)-(5-phospho-beta-D-ribosyl)glycinamide + L-glutamine + ATP + H2O = 2-formamido-N(1)-(5-O-phospho-beta-D-ribosyl)acetamidine + L-glutamate + ADP + phosphate + H(+). It participates in purine metabolism; IMP biosynthesis via de novo pathway; 5-amino-1-(5-phospho-D-ribosyl)imidazole from N(2)-formyl-N(1)-(5-phospho-D-ribosyl)glycinamide: step 1/2. Functionally, part of the phosphoribosylformylglycinamidine synthase complex involved in the purines biosynthetic pathway. Catalyzes the ATP-dependent conversion of formylglycinamide ribonucleotide (FGAR) and glutamine to yield formylglycinamidine ribonucleotide (FGAM) and glutamate. The FGAM synthase complex is composed of three subunits. PurQ produces an ammonia molecule by converting glutamine to glutamate. PurL transfers the ammonia molecule to FGAR to form FGAM in an ATP-dependent manner. PurS interacts with PurQ and PurL and is thought to assist in the transfer of the ammonia molecule from PurQ to PurL. The chain is Phosphoribosylformylglycinamidine synthase subunit PurL from Brucella canis (strain ATCC 23365 / NCTC 10854 / RM-666).